We begin with the raw amino-acid sequence, 412 residues long: Cytochrome p450 CYP199A2 (412 aa).

Substrate contacts are provided by residues 94 to 97 (RPPS) and S247. Position 361 (C361) interacts with heme.

This sequence belongs to the cytochrome P450 family. Interacts with the ferredoxin-like iron-sulfur protein ThcC. Requires heme as cofactor.

It localises to the cytoplasm. The catalysed reaction is 4-methoxybenzoate + AH2 + O2 = 4-hydroxybenzoate + formaldehyde + A + H2O. Its function is as follows. The oxidative demethylation of 4-methoxybenzoate requires the participation of the monooxygenase CYP199A2, the ferredoxin-like protein ThcC/RPA1872 and a ferredoxin reductase to mediate the transfer of electrons from NADH to CYP199A2. It is also active with 4-ethylbenzoate. This Rhodopseudomonas palustris (strain ATCC BAA-98 / CGA009) protein is Cytochrome p450 CYP199A2.